A 358-amino-acid polypeptide reads, in one-letter code: Electron transfer flavoprotein subunit alpha, mitochondrial (358 aa).

Residue 298–326 (LYMAFGVSGAIQHLAGMRDSKVIVAVNKD) participates in FAD binding.

Belongs to the ETF alpha-subunit/FixB family. As to quaternary structure, heterodimer of an alpha and a beta subunit. Requires FAD as cofactor.

It localises to the mitochondrion matrix. Functionally, the electron transfer flavoprotein serves as a specific electron acceptor for several dehydrogenases, including five acyl-CoA dehydrogenases, glutaryl-CoA and sarcosine dehydrogenase. It transfers the electrons to the main mitochondrial respiratory chain via ETF-ubiquinone oxidoreductase (ETF dehydrogenase). This chain is Electron transfer flavoprotein subunit alpha, mitochondrial (ETFA), found in Oryza sativa subsp. indica (Rice).